We begin with the raw amino-acid sequence, 438 residues long: Nucleolar protein 12 (438 aa).

Disordered regions lie at residues 1-28 (MGETNSSLDNENTSFVGKLSSSSNVDPT) and 60-94 (ANGVEEAAETIESDTKEVQNIKPKSKKKKKKLNDS). The span at 60–71 (ANGVEEAAETIE) shows a compositional bias: acidic residues. Phosphoserine occurs at positions 94 and 95. The interval 108-146 (AEEDEEKDKDSAGLINDEEDKSPAKQSVLEERTSQEDVK) is disordered. The segment covering 135–146 (VLEERTSQEDVK) has biased composition (basic and acidic residues). RRM domains lie at 164-262 (KTVF…SVSH) and 270-348 (RCVF…RAKS). 2 stretches are compositionally biased toward basic residues: residues 346-357 (AKSTKPKSITRS) and 402-412 (AKKKVNKKRKE). Disordered stretches follow at residues 346 to 366 (AKSTKPKSITRSKRGDEKTRT) and 390 to 438 (EGHR…KKDK).

Belongs to the RRM RBM34 family.

It localises to the nucleus. The protein resides in the nucleolus. Involved in pre-25S rRNA processing. In Schizosaccharomyces pombe (strain 972 / ATCC 24843) (Fission yeast), this protein is Nucleolar protein 12 (nop12).